The following is a 207-amino-acid chain: Large ribosomal subunit protein uL4 (207 aa).

A disordered region spans residues 49–78 (HAVKNRSAVSGGGRKPWRQKGTGRARQGSI).

Belongs to the universal ribosomal protein uL4 family. In terms of assembly, part of the 50S ribosomal subunit.

One of the primary rRNA binding proteins, this protein initially binds near the 5'-end of the 23S rRNA. It is important during the early stages of 50S assembly. It makes multiple contacts with different domains of the 23S rRNA in the assembled 50S subunit and ribosome. Its function is as follows. Forms part of the polypeptide exit tunnel. This Streptococcus pyogenes serotype M1 protein is Large ribosomal subunit protein uL4 (rplD).